We begin with the raw amino-acid sequence, 374 residues long: Chaperone protein DnaJ (374 aa).

Positions 5–70 (DYYEVLGVAR…NKRRMYDSHG (66 aa)) constitute a J domain. The CR-type zinc finger occupies 130-207 (GVERRIEIPT…CHGNGRVEED (78 aa)). Zn(2+) contacts are provided by Cys143, Cys146, Cys159, Cys162, Cys181, Cys184, Cys195, and Cys198. CXXCXGXG motif repeat units follow at residues 143-150 (CGDCDGSG), 159-166 (CNVCHGRG), 181-188 (CHNCGGRG), and 195-202 (CKTCHGNG).

This sequence belongs to the DnaJ family. Homodimer. The cofactor is Zn(2+).

The protein localises to the cytoplasm. In terms of biological role, participates actively in the response to hyperosmotic and heat shock by preventing the aggregation of stress-denatured proteins and by disaggregating proteins, also in an autonomous, DnaK-independent fashion. Unfolded proteins bind initially to DnaJ; upon interaction with the DnaJ-bound protein, DnaK hydrolyzes its bound ATP, resulting in the formation of a stable complex. GrpE releases ADP from DnaK; ATP binding to DnaK triggers the release of the substrate protein, thus completing the reaction cycle. Several rounds of ATP-dependent interactions between DnaJ, DnaK and GrpE are required for fully efficient folding. Also involved, together with DnaK and GrpE, in the DNA replication of plasmids through activation of initiation proteins. This chain is Chaperone protein DnaJ, found in Stenotrophomonas maltophilia (strain K279a).